Consider the following 125-residue polypeptide: Small ribosomal subunit protein uS13 (125 aa).

The interval 90–125 is disordered; sequence QRHRKGLPVRGQRTKTNARTRKGPKRTVAGKKKATK.

It belongs to the universal ribosomal protein uS13 family. In terms of assembly, part of the 30S ribosomal subunit. Forms a loose heterodimer with protein S19. Forms two bridges to the 50S subunit in the 70S ribosome.

Functionally, located at the top of the head of the 30S subunit, it contacts several helices of the 16S rRNA. In the 70S ribosome it contacts the 23S rRNA (bridge B1a) and protein L5 of the 50S subunit (bridge B1b), connecting the 2 subunits; these bridges are implicated in subunit movement. Contacts the tRNAs in the A and P-sites. The polypeptide is Small ribosomal subunit protein uS13 (Bifidobacterium longum (strain DJO10A)).